A 477-amino-acid chain; its full sequence is 3-isopropylmalate dehydratase large subunit (477 aa).

The [4Fe-4S] cluster site is built by cysteine 352, cysteine 413, and cysteine 416.

It belongs to the aconitase/IPM isomerase family. LeuC type 1 subfamily. Heterodimer of LeuC and LeuD. [4Fe-4S] cluster serves as cofactor.

The catalysed reaction is (2R,3S)-3-isopropylmalate = (2S)-2-isopropylmalate. The protein operates within amino-acid biosynthesis; L-leucine biosynthesis; L-leucine from 3-methyl-2-oxobutanoate: step 2/4. Catalyzes the isomerization between 2-isopropylmalate and 3-isopropylmalate, via the formation of 2-isopropylmaleate. The sequence is that of 3-isopropylmalate dehydratase large subunit from Pseudomonas entomophila (strain L48).